A 367-amino-acid polypeptide reads, in one-letter code: Tetraacyldisaccharide 4'-kinase (367 aa).

ATP is bound at residue 68–75 (VLGGSGKT).

Belongs to the LpxK family.

The catalysed reaction is a lipid A disaccharide + ATP = a lipid IVA + ADP + H(+). Its pathway is glycolipid biosynthesis; lipid IV(A) biosynthesis; lipid IV(A) from (3R)-3-hydroxytetradecanoyl-[acyl-carrier-protein] and UDP-N-acetyl-alpha-D-glucosamine: step 6/6. Functionally, transfers the gamma-phosphate of ATP to the 4'-position of a tetraacyldisaccharide 1-phosphate intermediate (termed DS-1-P) to form tetraacyldisaccharide 1,4'-bis-phosphate (lipid IVA). This Chlamydia abortus (strain DSM 27085 / S26/3) (Chlamydophila abortus) protein is Tetraacyldisaccharide 4'-kinase.